Consider the following 283-residue polypeptide: Thymidylate synthase (283 aa).

DUMP is bound at residue Arg-22. Residue Cys-160 is the Nucleophile of the active site. DUMP-binding positions include 180-183 (RSCD), Asn-191, and 221-223 (HIY). Asp-183 is a (6R)-5,10-methylene-5,6,7,8-tetrahydrofolate binding site. A (6R)-5,10-methylene-5,6,7,8-tetrahydrofolate-binding site is contributed by Ala-282.

Belongs to the thymidylate synthase family. Bacterial-type ThyA subfamily. In terms of assembly, homodimer.

It localises to the cytoplasm. It carries out the reaction dUMP + (6R)-5,10-methylene-5,6,7,8-tetrahydrofolate = 7,8-dihydrofolate + dTMP. It participates in pyrimidine metabolism; dTTP biosynthesis. Catalyzes the reductive methylation of 2'-deoxyuridine-5'-monophosphate (dUMP) to 2'-deoxythymidine-5'-monophosphate (dTMP) while utilizing 5,10-methylenetetrahydrofolate (mTHF) as the methyl donor and reductant in the reaction, yielding dihydrofolate (DHF) as a by-product. This enzymatic reaction provides an intracellular de novo source of dTMP, an essential precursor for DNA biosynthesis. This is Thymidylate synthase from Shewanella frigidimarina (strain NCIMB 400).